The chain runs to 87 residues: Omega-lycotoxin-Am1c (87 aa).

Residues 1 to 17 form the signal peptide; sequence MKLSIFFVLFFIAIAYC. A propeptide spanning residues 18–40 is cleaved from the precursor; it reads QPEFLDDEEDEVEETLPVAEEGR. 4 disulfides stabilise this stretch: Cys44–Cys59, Cys51–Cys64, Cys58–Cys84, and Cys66–Cys82.

The protein belongs to the neurotoxin omega-lctx family. As to expression, expressed by the venom gland.

The protein resides in the secreted. Functionally, modulates Cav2.1/CACNA1A voltage-gated calcium channels (P/Q-type currents) in rat cerebellar Purkinje cells and hippocampal CA1-CA3 neurons. At saturating concentrations (&gt;10 nM) decelerates activation kinetics and slightly increases peak amplitude without affecting deactivation kinetics. In vivo, does not cause death when intravenously injected into mice. In rat models, through its activity on Cav2.1/CACNA1A, has an ameliorative effect on memory defects provoked by hyperstimulation of N-methyl-D-aspartate receptors (NMDARs) in the hippocampus. The polypeptide is Omega-lycotoxin-Am1c (Alopecosa marikovskyi (Wolf spider)).